Consider the following 479-residue polypeptide: 3-phytase B (479 aa).

The signal sequence occupies residues 1-19; it reads MPRTSLLTLACALATGASA. Disulfide bonds link cysteine 71–cysteine 387, cysteine 128–cysteine 472, cysteine 216–cysteine 441, cysteine 225–cysteine 298, and cysteine 413–cysteine 421. Residue histidine 82 is the Nucleophile of the active site. Asparagine 191 carries N-linked (GlcNAc...) asparagine glycosylation. An N-linked (GlcNAc...) asparagine glycan is attached at asparagine 315. Aspartate 338 (proton donor) is an active-site residue. Asparagine 458 is a glycosylation site (N-linked (GlcNAc...) asparagine).

This sequence belongs to the histidine acid phosphatase family. Homodimer.

It catalyses the reaction 1D-myo-inositol hexakisphosphate + H2O = 1D-myo-inositol 1,2,4,5,6-pentakisphosphate + phosphate. Catalyzes the hydrolysis of inorganic orthophosphate from phytate. This Aspergillus awamori (Black koji mold) protein is 3-phytase B (phyB).